We begin with the raw amino-acid sequence, 1190 residues long: Tight junction protein 2 (1190 aa).

Ser16 carries the post-translational modification Phosphoserine. A PDZ 1 domain is found at 33 to 120; the sequence is TVTLQKDSKR…VAAIVVKRPR (88 aa). Phosphoserine is present on residues Ser130, Ser150, Ser153, Ser163, Ser168, Ser170, Ser174, Ser200, Ser220, Ser232, Ser244, Ser266, Ser325, Ser398, Ser400, Ser406, Ser415, Ser424, Ser430, and Ser431. The interval 152-306 is disordered; that stretch reads RSGYSERSRL…PEPRGRPGPI (155 aa). The span at 169 to 291 shows a compositional bias: basic and acidic residues; the sequence is RSWEDSPERG…PRSRSREHPH (123 aa). The region spanning 307 to 385 is the PDZ 2 domain; the sequence is GVLLMKSRAN…KLQLVVLRDS (79 aa). The interval 408-506 is disordered; the sequence is IESNRSFSPE…RPSPEDEAIY (99 aa). Residues 415 to 446 are compositionally biased toward basic and acidic residues; the sequence is SPEERRHQYSDYDYHSSSEKLKERPSSREDTP. A Phosphothreonine modification is found at Thr455. The residue at position 499 (Ser499) is a Phosphoserine. Positions 509–590 constitute a PDZ 3 domain; it reads NTKMVRFKKG…GEMVTILAQS (82 aa). Tyr574 carries the phosphotyrosine modification. An SH3 domain is found at 604 to 669; that stretch reads GDSFFIRSHF…PNKSRAEQMA (66 aa). The Guanylate kinase-like domain occupies 678–876; the sequence is NAGDRADFWR…WFGSLKDTIQ (199 aa). Phosphoserine occurs at positions 702 and 902. The residue at position 905 (Thr905) is a Phosphothreonine. Ser913 and Ser920 each carry phosphoserine. Disordered stretches follow at residues 920-1079 and 1105-1190; these read SDFE…KSVL and NARI…DTEL. 2 positions are modified to phosphothreonine: Thr925 and Thr933. Basic and acidic residues predominate over residues 956–967; it reads VQHEESIRKPSP. Ser966, Ser978, Ser986, Ser1006, Ser1067, and Ser1068 each carry phosphoserine. Residues 994 to 1014 show a composition bias toward basic and acidic residues; it reads EPPKAKTQNKEESYDFSKSYE. Residues 1060-1072 show a composition bias toward acidic residues; the sequence is EGEEVGESSEEQD. Position 1118 is a phosphotyrosine (Tyr1118). Thr1131 bears the Phosphothreonine mark. Residues Ser1147 and Ser1159 each carry the phosphoserine modification. Residues 1166-1175 are compositionally biased toward basic and acidic residues; it reads YRQQLSEHSK. The tract at residues 1188–1190 is interaction with SCRIB; that stretch reads TEL.

Belongs to the MAGUK family. Homodimer. Interacts (via PDZ2 domain) with TJP1/ZO1 (via PDZ2 domain). Interacts with OCLN. Interacts with UBN1. Interacts with SAFB in the nucleus. Interacts with SCRIB. Interacts with USP53 (via the C-terminal region). Interacts with claudins, including CLDN1, CLDN2, CLDN3, CLDN5 and CLDN7. Interacts with CLDN18. Interacts (via N-terminus) with CTNNA1. As to expression, this protein is found in epithelial cell junctions. Isoform A1 is abundant in the heart and brain. Detected in brain and skeletal muscle. It is present almost exclusively in normal tissues. Isoform C1 is expressed at high level in the kidney, pancreas, heart and placenta. Not detected in brain and skeletal muscle. Found in normal as well as in most neoplastic tissues.

It localises to the cell junction. The protein resides in the adherens junction. Its subcellular location is the cell membrane. It is found in the tight junction. The protein localises to the nucleus. Functionally, plays a role in tight junctions and adherens junctions. Acts as a positive regulator of RANKL-induced osteoclast differentiation, potentially via mediating downstream transcriptional activity. The polypeptide is Tight junction protein 2 (Homo sapiens (Human)).